The chain runs to 304 residues: Acetyl-coenzyme A carboxylase carboxyl transferase subunit beta (304 aa).

The region spanning 26–295 is the CoA carboxyltransferase N-terminal domain; sequence VWTKCTSCEQ…PFVEPELVEN (270 aa). Zn(2+) contacts are provided by cysteine 30, cysteine 33, cysteine 49, and cysteine 52. A C4-type zinc finger spans residues 30–52; the sequence is CTSCEQVLYRDELRRHLEVCPKC. The tract at residues 281–304 is disordered; that stretch reads SNKPSPFVEPELVENEEQSKSDNE.

This sequence belongs to the AccD/PCCB family. Acetyl-CoA carboxylase is a heterohexamer composed of biotin carboxyl carrier protein (AccB), biotin carboxylase (AccC) and two subunits each of ACCase subunit alpha (AccA) and ACCase subunit beta (AccD). It depends on Zn(2+) as a cofactor.

The protein resides in the cytoplasm. The enzyme catalyses N(6)-carboxybiotinyl-L-lysyl-[protein] + acetyl-CoA = N(6)-biotinyl-L-lysyl-[protein] + malonyl-CoA. It participates in lipid metabolism; malonyl-CoA biosynthesis; malonyl-CoA from acetyl-CoA: step 1/1. Component of the acetyl coenzyme A carboxylase (ACC) complex. Biotin carboxylase (BC) catalyzes the carboxylation of biotin on its carrier protein (BCCP) and then the CO(2) group is transferred by the transcarboxylase to acetyl-CoA to form malonyl-CoA. This chain is Acetyl-coenzyme A carboxylase carboxyl transferase subunit beta, found in Pasteurella multocida (strain Pm70).